Consider the following 578-residue polypeptide: Vitelline membrane-like protein (578 aa).

Residues 1–21 form the signal peptide; it reads MCGRRLLFLAAFGCLLANAFS. The tract at residues 72–452 is 45 X 8 AA approximate tandem repeats of [PS]-[AS]-Y-S-A-P-A-[AS]; sequence QGYSAPAAPV…AAPSYSAPAS (381 aa). 2 disordered regions span residues 133–442 and 487–514; these read ASSS…YSAP and SGSP…ASKS. One can recognise a VM domain in the interval 549 to 578; that stretch reads SLPSPPCPKNYVFSCSSVFTPAPCSQGYGY.

Interacts with Vm26Aa and Vm26Ab; forms part of a disulfide-linked network within the vitelline membrane of stage 10 egg chambers. Post-translationally, becomes part of a disulfide-linked network including other vitelline membrane proteins, including Vm26Aa and Vm26Ab, during vitelline membrane biogenesis and maturation. Sulfated by pip; probably involved in embryo dorsal-ventral axis determination. Sulfation by pip may occur on covalently bound glycosaminoglycans. Secreted into the perivitelline space and becomes stably incorporated into the vitelline membrane (at protein level). Expressed throughout the follicle cell layer of stage 10 egg chambers.

Its subcellular location is the secreted. The protein localises to the extracellular space. The protein resides in the extracellular matrix. In terms of biological role, major early eggshell protein secreted by folicle cells into the perivitelline space and incorporated into the vitelline membrane. Localized sulfation by pip may be involved in embryo dorsal-ventral axis determination. This Drosophila melanogaster (Fruit fly) protein is Vitelline membrane-like protein.